A 227-amino-acid polypeptide reads, in one-letter code: Ribosomal RNA small subunit methyltransferase G (227 aa).

S-adenosyl-L-methionine-binding positions include Gly81, Leu86, 131–132 (AE), and Arg149.

This sequence belongs to the methyltransferase superfamily. RNA methyltransferase RsmG family.

The protein resides in the cytoplasm. Specifically methylates the N7 position of guanine in position 518 of 16S rRNA. The protein is Ribosomal RNA small subunit methyltransferase G of Rhodococcus jostii (strain RHA1).